A 1279-amino-acid chain; its full sequence is Photoreceptor cilium actin regulator (1279 aa).

Residue G2 is the site of N-myristoyl glycine attachment. C3 carries the S-palmitoyl cysteine lipid modification. Disordered stretches follow at residues 101–168 (NKPQ…KGRV), 380–598 (AAQV…SHVE), 802–821 (EVSESEDISGDVEEDLENLP), 860–1107 (ASHP…TTAK), and 1127–1279 (KSSS…KEIS). Positions 126-168 (FSGKESKENTPQETSKGNRESVCHQPDSQDHCRQSATESKGRV) are enriched in basic and acidic residues. The span at 477–491 (SEEEDCSPEEEDELS) shows a compositional bias: acidic residues. Composition is skewed to basic and acidic residues over residues 535-547 (LKMKEAISERIKF) and 580-598 (GPERQRRSQSEGCLKSHVE). The segment covering 804-818 (SESEDISGDVEEDLE) has biased composition (acidic residues). 3 stretches are compositionally biased toward polar residues: residues 886–901 (GSGSSPRLHSTRSGST), 913–925 (DLNSKQTASPSSE), and 955–965 (TNPTPGQSRTL). The span at 972–990 (FSRDPHSSEASRKGPERSL) shows a compositional bias: basic and acidic residues. The segment covering 1047-1062 (RKTTSPPCQHPQSNPA) has biased composition (polar residues). The span at 1076 to 1090 (PSSASCSSPSVSPSR) shows a compositional bias: low complexity. A compositionally biased stretch (basic and acidic residues) spans 1091-1100 (GSKDSIHSED). The span at 1226 to 1241 (WNNSRVPELQGSSTKR) shows a compositional bias: polar residues. Positions 1259 to 1279 (RMNRGQDRPQPESQPQHKEIS) are enriched in basic and acidic residues.

Specifically expressed in retina.

It localises to the cell projection. The protein resides in the cilium. It is found in the photoreceptor outer segment. Its subcellular location is the photoreceptor inner segment. Plays an essential role for normal photoreceptor cell maintenance and vision. This Mus musculus (Mouse) protein is Photoreceptor cilium actin regulator.